Here is a 644-residue protein sequence, read N- to C-terminus: Exoribonuclease 2 (644 aa).

One can recognise an RNB domain in the interval 189-516; sequence RQDLTALNFV…NHRLLKAVIK (328 aa). In terms of domain architecture, S1 motif spans 561 to 643; that stretch reads DTRFAAEIID…DTRSIIARPA (83 aa).

The protein belongs to the RNR ribonuclease family. RNase II subfamily.

The protein resides in the cytoplasm. The catalysed reaction is Exonucleolytic cleavage in the 3'- to 5'-direction to yield nucleoside 5'-phosphates.. Involved in mRNA degradation. Hydrolyzes single-stranded polyribonucleotides processively in the 3' to 5' direction. This is Exoribonuclease 2 from Salmonella arizonae (strain ATCC BAA-731 / CDC346-86 / RSK2980).